A 237-amino-acid chain; its full sequence is MTAHKPGDPTTLNRLYGRSKGKPLRAGQQDLVDTLLPQIAVPLDGEVTARRLFGFDRPLHFEIGFGGGEHMAARADMLPDHGFIGAEPFINGVAQALVHVAGDHGQHPPLGNVRIHHGDALEVLRRIPDGALAFVYLLHPDPWPKARHAKRRMMNDGPLDLIAAKLKPGGEFRFGTDHPIYLRHALMVMRRHRHQFEWLAKDARDFQVRPGGWPETRYEAKARAQGHEVWYFRWRRR.

The disordered stretch occupies residues Met-1–Leu-24. Residues Glu-62, Glu-87, Asp-119, and Asp-141 each contribute to the S-adenosyl-L-methionine site. Asp-141 is an active-site residue. Residues Lys-145, Asp-177, and Thr-216 to Glu-219 each bind substrate.

This sequence belongs to the class I-like SAM-binding methyltransferase superfamily. TrmB family.

It carries out the reaction guanosine(46) in tRNA + S-adenosyl-L-methionine = N(7)-methylguanosine(46) in tRNA + S-adenosyl-L-homocysteine. The protein operates within tRNA modification; N(7)-methylguanine-tRNA biosynthesis. Functionally, catalyzes the formation of N(7)-methylguanine at position 46 (m7G46) in tRNA. The chain is tRNA (guanine-N(7)-)-methyltransferase from Sphingopyxis alaskensis (strain DSM 13593 / LMG 18877 / RB2256) (Sphingomonas alaskensis).